A 515-amino-acid polypeptide reads, in one-letter code: Interferon-induced, double-stranded RNA-activated protein kinase (515 aa).

Residue Ala-2 is modified to N-acetylalanine. Residues 8–76 (FYMDKLNKYR…AKLAVDILDN (69 aa)) form the DRBM 1 domain. Lys-68 is covalently cross-linked (Glycyl lysine isopeptide (Lys-Gly) (interchain with G-Cter in ISG15)). Phosphothreonine is present on Thr-84. In terms of domain architecture, DRBM 2 spans 95–162 (NYIGLVNSFA…AKEAYQKLLK (68 aa)). Tyr-96 bears the Phosphotyrosine; by autocatalysis mark. Lys-154 participates in a covalent cross-link: Glycyl lysine isopeptide (Lys-Gly) (interchain with G-Cter in ISG15). Tyr-157 is subject to Phosphotyrosine; by autocatalysis. A disordered region spans residues 204 to 224 (ENVFTNGLGENKRKSGVKVSP). Thr-233 carries the post-translational modification Phosphothreonine. Residues 241–515 (DFEDIEEIGL…ISEKKKRNTC (275 aa)) form an interaction with TRAF5 region. Residues 242–504 (FEDIEEIGLG…EILKTLAEWR (263 aa)) enclose the Protein kinase domain. 248-256 (IGLGGFGQV) is a binding site for ATP. The residue at position 268 (Tyr-268) is a Phosphotyrosine; by autocatalysis. Lys-271 serves as a coordination point for ATP. Residue Asp-376 is the Proton acceptor of the active site. 2 positions are modified to phosphothreonine; by autocatalysis: Thr-409 and Thr-414. Residue Ser-419 is modified to Phosphoserine.

The protein belongs to the protein kinase superfamily. Ser/Thr protein kinase family. GCN2 subfamily. As to quaternary structure, homodimer. Interacts with DNAJC3 and STRBP. Forms a complex with FANCA, FANCC, FANCG and HSP70. Interacts with ADAR/ADAR1. The inactive form interacts with NCK1. Interacts (via the kinase catalytic domain) with STAT3 (via SH2 domain), TRAF2 (C-terminus), TRAF5 (C-terminus) and TRAF6 (C-terminus). Interacts with MAP2K6, TARBP2, NLRP1, NLRC4 and AIM2. Interacts (via DRBM 1 domain) with DUS2L (via DRBM domain). Interacts with DHX9 (via N-terminus) and this interaction is dependent upon activation of the kinase. The inactive form interacts with GSN. Interacts with IKBKB/IKKB, NPM1, NLRP3 and IRS1. In terms of processing, autophosphorylated on several Ser, Thr and Tyr residues. Autophosphorylation of Thr-414 is dependent on Thr-409 and is stimulated by dsRNA binding and dimerization. Autophosphorylation apparently leads to the activation of the kinase. Tyrosine autophosphorylation is essential for efficient dsRNA-binding, dimerization, and kinase activation. As to expression, expressed in heart, lung, brain, kidney, testes, thymus and bone marrow.

The protein resides in the cytoplasm. The protein localises to the nucleus. It localises to the perinuclear region. The enzyme catalyses L-seryl-[protein] + ATP = O-phospho-L-seryl-[protein] + ADP + H(+). It catalyses the reaction L-threonyl-[protein] + ATP = O-phospho-L-threonyl-[protein] + ADP + H(+). The catalysed reaction is L-tyrosyl-[protein] + ATP = O-phospho-L-tyrosyl-[protein] + ADP + H(+). Initially produced in an inactive form and is activated by binding to viral dsRNA, which causes dimerization and autophosphorylation in the activation loop and stimulation of function. ISGylation can activate it in the absence of viral infection. Can also be activated by heparin, pro-inflammatory stimuli, growth factors, cytokines, oxidative stress and the cellular protein PRKRA. Activity is markedly stimulated by manganese ions. Activation is blocked by the cellular proteins TARBP2, DUS2L, NPM1, NCK1 and ADAR. Its function is as follows. IFN-induced dsRNA-dependent serine/threonine-protein kinase that phosphorylates the alpha subunit of eukaryotic translation initiation factor 2 (EIF2S1/eIF-2-alpha) and plays a key role in the innate immune response to viral infection. Inhibits viral replication via the integrated stress response (ISR): EIF2S1/eIF-2-alpha phosphorylation in response to viral infection converts EIF2S1/eIF-2-alpha in a global protein synthesis inhibitor, resulting to a shutdown of cellular and viral protein synthesis, while concomitantly initiating the preferential translation of ISR-specific mRNAs, such as the transcriptional activator ATF4. Exerts its antiviral activity on a wide range of DNA and RNA viruses including west nile virus (WNV), sindbis virus (SV), foot-and-mouth virus (FMDV), semliki Forest virus (SFV) and lymphocytic choriomeningitis virus (LCMV). Also involved in the regulation of signal transduction, apoptosis, cell proliferation and differentiation: phosphorylates other substrates including p53/TP53, PPP2R5A, DHX9, ILF3, and IRS1. In addition to serine/threonine-protein kinase activity, also has tyrosine-protein kinase activity and phosphorylates CDK1 at 'Tyr-4' upon DNA damage, facilitating its ubiquitination and proteasomal degradation. Either as an adapter protein and/or via its kinase activity, can regulate various signaling pathways (p38 MAP kinase, NF-kappa-B and insulin signaling pathways) and transcription factors (JUN, STAT1, STAT3, IRF1, ATF3) involved in the expression of genes encoding pro-inflammatory cytokines and IFNs. Activates the NF-kappa-B pathway via interaction with IKBKB and TRAF family of proteins and activates the p38 MAP kinase pathway via interaction with MAP2K6. Can act as both a positive and negative regulator of the insulin signaling pathway (ISP). Negatively regulates ISP by inducing the inhibitory phosphorylation of insulin receptor substrate 1 (IRS1) at 'Ser-312' and positively regulates ISP via phosphorylation of PPP2R5A which activates FOXO1, which in turn up-regulates the expression of insulin receptor substrate 2 (IRS2). Can regulate NLRP3 inflammasome assembly and the activation of NLRP3, NLRP1, AIM2 and NLRC4 inflammasomes. Plays a role in the regulation of the cytoskeleton by binding to gelsolin (GSN), sequestering the protein in an inactive conformation away from actin. The sequence is that of Interferon-induced, double-stranded RNA-activated protein kinase (Eif2ak2) from Mus musculus (Mouse).